Reading from the N-terminus, the 523-residue chain is Magnesium/proton exchanger 1 (523 aa).

11 helical membrane passes run 24-44 (LLPIGVRAFIYTAVLAYCFIG), 88-108 (IADVALLAFGTSFPQISLATI), 125-145 (GTLVGSAAFDLFPIHAVCVVM), 157-177 (LGVWLVELFWSFWAYIWLYII), 185-205 (VITLWEALLTVLQYGLLLLHA), 325-345 (VIGISWNLIIAPWKMLFAFVP), 349-369 (IAHGWIAFICSLIFISGIAYG), 377-397 (ISCVTGVSPYVIAFTALAAGT), 428-448 (VNIYVGIGVPWLVDTMYNYFV), 461-481 (LSFSLLVFFATSFGCITVLVL), and 495-515 (MWAWATSVYFMILWVVFVVLS).

Belongs to the Ca(2+):cation antiporter (CaCA) (TC 2.A.19) family. MHX subfamily.

It localises to the vacuole membrane. Vacuolar transporter that exchanges protons with Mg(2+), Zn(2+) and Fe(2+) ions. May control the partitioning of Mg(2+) and Zn(2+) between plant organs. This Oryza sativa subsp. japonica (Rice) protein is Magnesium/proton exchanger 1 (MHX1).